Consider the following 477-residue polypeptide: Chromosomal replication initiator protein DnaA (477 aa).

A domain I, interacts with DnaA modulators region spans residues 1-87; the sequence is MSDRSDPTHA…AGVSNFAIVV (87 aa). Residues 87 to 132 form a domain II region; it reads VNPEIAQDAFAQHPEPAAEQPYIETPTITAPTDNPGLPASPSRGDS. Residues 112-131 form a disordered region; that stretch reads PTITAPTDNPGLPASPSRGD. The segment at 133–349 is domain III, AAA+ region; it reads RLNPKYGFDT…GTLIRVTAFA (217 aa). G177, G179, K180, and T181 together coordinate ATP. The segment at 350 to 477 is domain IV, binds dsDNA; sequence SLNKTPVDLA…IKQNHRYGKM (128 aa).

This sequence belongs to the DnaA family. As to quaternary structure, oligomerizes as a right-handed, spiral filament on DNA at oriC.

The protein resides in the cytoplasm. In terms of biological role, plays an essential role in the initiation and regulation of chromosomal replication. ATP-DnaA binds to the origin of replication (oriC) to initiate formation of the DNA replication initiation complex once per cell cycle. Binds the DnaA box (a 9 base pair repeat at the origin) and separates the double-stranded (ds)DNA. Forms a right-handed helical filament on oriC DNA; dsDNA binds to the exterior of the filament while single-stranded (ss)DNA is stabiized in the filament's interior. The ATP-DnaA-oriC complex binds and stabilizes one strand of the AT-rich DNA unwinding element (DUE), permitting loading of DNA polymerase. After initiation quickly degrades to an ADP-DnaA complex that is not apt for DNA replication. Binds acidic phospholipids. In Clavibacter michiganensis subsp. michiganensis (strain NCPPB 382), this protein is Chromosomal replication initiator protein DnaA.